The sequence spans 182 residues: Peptidyl-prolyl cis-trans isomerase ssp-1 (182 aa).

Residues 7–41 enclose the WW domain; that stretch reads TGLPEDWEVRHSQSKNLPYYFNSATKTSRWEPPSG. The PpiC domain maps to 71–182; it reads QGKIRCAHLL…SGLHLIERLE (112 aa).

It carries out the reaction [protein]-peptidylproline (omega=180) = [protein]-peptidylproline (omega=0). In terms of biological role, site-specific PPIase with respect to the amino acid N-terminal to the proline residue. Peptides with glutamate, phosphoserine, or phosphothreonine in the -1 position are the best substrates. It is not only able to isomerize small peptides but is also active in protein folding. This is Peptidyl-prolyl cis-trans isomerase ssp-1 (ssp-1) from Neurospora crassa (strain ATCC 24698 / 74-OR23-1A / CBS 708.71 / DSM 1257 / FGSC 987).